Consider the following 167-residue polypeptide: MNFLDESFLLAVSFVIFIYLIYRPAKKAILNSLDTKIIEIQEKVLKAKKLKEDAALLFEQTKVQIQKLEALRSQMIEESDKATQKIIQDKTKAMEEFLEQKKADAIQLIQNQKLIASKDLQDEFCDEVITLVSKYFRSVQLSERSIAKNLMDKSDFAHNASHATHLH.

Residues 7–25 (SFLLAVSFVIFIYLIYRPA) traverse the membrane as a helical segment.

The protein belongs to the ATPase B chain family. In terms of assembly, F-type ATPases have 2 components, F(1) - the catalytic core - and F(0) - the membrane proton channel. F(1) has five subunits: alpha(3), beta(3), gamma(1), delta(1), epsilon(1). F(0) has three main subunits: a(1), b(2) and c(10-14). The alpha and beta chains form an alternating ring which encloses part of the gamma chain. F(1) is attached to F(0) by a central stalk formed by the gamma and epsilon chains, while a peripheral stalk is formed by the delta and b chains.

Its subcellular location is the cell inner membrane. Its function is as follows. F(1)F(0) ATP synthase produces ATP from ADP in the presence of a proton or sodium gradient. F-type ATPases consist of two structural domains, F(1) containing the extramembraneous catalytic core and F(0) containing the membrane proton channel, linked together by a central stalk and a peripheral stalk. During catalysis, ATP synthesis in the catalytic domain of F(1) is coupled via a rotary mechanism of the central stalk subunits to proton translocation. In terms of biological role, component of the F(0) channel, it forms part of the peripheral stalk, linking F(1) to F(0). The protein is ATP synthase subunit b of Rickettsia typhi (strain ATCC VR-144 / Wilmington).